A 403-amino-acid chain; its full sequence is Ribosomal RNA large subunit methyltransferase I (403 aa).

In terms of domain architecture, PUA spans 9 to 88 (YPRLVLSKGR…ESIDIAFFTR (80 aa)).

It belongs to the methyltransferase superfamily. RlmI family.

The protein resides in the cytoplasm. It catalyses the reaction cytidine(1962) in 23S rRNA + S-adenosyl-L-methionine = 5-methylcytidine(1962) in 23S rRNA + S-adenosyl-L-homocysteine + H(+). Its function is as follows. Specifically methylates the cytosine at position 1962 (m5C1962) of 23S rRNA. The sequence is that of Ribosomal RNA large subunit methyltransferase I from Salmonella choleraesuis (strain SC-B67).